The primary structure comprises 72 residues: Large ribosomal subunit protein bL31 (72 aa).

It belongs to the bacterial ribosomal protein bL31 family. Type A subfamily. Part of the 50S ribosomal subunit.

Binds the 23S rRNA. This chain is Large ribosomal subunit protein bL31, found in Rhodospirillum rubrum (strain ATCC 11170 / ATH 1.1.1 / DSM 467 / LMG 4362 / NCIMB 8255 / S1).